The chain runs to 157 residues: Transcription elongation factor GreA (157 aa).

The protein belongs to the GreA/GreB family.

Functionally, necessary for efficient RNA polymerase transcription elongation past template-encoded arresting sites. The arresting sites in DNA have the property of trapping a certain fraction of elongating RNA polymerases that pass through, resulting in locked ternary complexes. Cleavage of the nascent transcript by cleavage factors such as GreA or GreB allows the resumption of elongation from the new 3'terminus. GreA releases sequences of 2 to 3 nucleotides. The chain is Transcription elongation factor GreA from Azorhizobium caulinodans (strain ATCC 43989 / DSM 5975 / JCM 20966 / LMG 6465 / NBRC 14845 / NCIMB 13405 / ORS 571).